Consider the following 297-residue polypeptide: Glycerol-3-phosphate dehydrogenase [NAD(P)+] (297 aa).

NADPH is bound by residues Trp11, Arg30, and Lys79. Positions 79, 107, and 109 each coordinate sn-glycerol 3-phosphate. Residue Ala111 participates in NADPH binding. Sn-glycerol 3-phosphate contacts are provided by Lys161, Asp214, Ser224, Arg225, and Asn226. Lys161 (proton acceptor) is an active-site residue. Arg225 contributes to the NADPH binding site. Residues Val249 and Glu251 each coordinate NADPH.

This sequence belongs to the NAD-dependent glycerol-3-phosphate dehydrogenase family.

The protein localises to the cytoplasm. It catalyses the reaction sn-glycerol 3-phosphate + NAD(+) = dihydroxyacetone phosphate + NADH + H(+). It carries out the reaction sn-glycerol 3-phosphate + NADP(+) = dihydroxyacetone phosphate + NADPH + H(+). It participates in membrane lipid metabolism; glycerophospholipid metabolism. Its function is as follows. Catalyzes the reduction of the glycolytic intermediate dihydroxyacetone phosphate (DHAP) to sn-glycerol 3-phosphate (G3P), the key precursor for phospholipid synthesis. In Wolinella succinogenes (strain ATCC 29543 / DSM 1740 / CCUG 13145 / JCM 31913 / LMG 7466 / NCTC 11488 / FDC 602W) (Vibrio succinogenes), this protein is Glycerol-3-phosphate dehydrogenase [NAD(P)+].